The primary structure comprises 342 residues: Uroporphyrinogen decarboxylase (342 aa).

Substrate contacts are provided by residues 21 to 25, Asp71, Tyr148, Ser203, and His316; that span reads RQAGR.

Belongs to the uroporphyrinogen decarboxylase family. Homodimer.

It is found in the cytoplasm. The catalysed reaction is uroporphyrinogen III + 4 H(+) = coproporphyrinogen III + 4 CO2. Its pathway is porphyrin-containing compound metabolism; protoporphyrin-IX biosynthesis; coproporphyrinogen-III from 5-aminolevulinate: step 4/4. Catalyzes the decarboxylation of four acetate groups of uroporphyrinogen-III to yield coproporphyrinogen-III. The sequence is that of Uroporphyrinogen decarboxylase from Campylobacter curvus (strain 525.92).